The primary structure comprises 375 residues: Tyrosine--tRNA ligase (375 aa).

Residues Y37, Y168, Q172, D175, and Q190 each coordinate L-tyrosine. Residues 251-255 (KMSKS) carry the 'KMSKS' region motif. K254 is an ATP binding site.

It belongs to the class-I aminoacyl-tRNA synthetase family. TyrS type 4 subfamily. Homodimer.

Its subcellular location is the cytoplasm. The enzyme catalyses tRNA(Tyr) + L-tyrosine + ATP = L-tyrosyl-tRNA(Tyr) + AMP + diphosphate + H(+). Its function is as follows. Catalyzes the attachment of tyrosine to tRNA(Tyr) in a two-step reaction: tyrosine is first activated by ATP to form Tyr-AMP and then transferred to the acceptor end of tRNA(Tyr). The sequence is that of Tyrosine--tRNA ligase from Pyrococcus horikoshii (strain ATCC 700860 / DSM 12428 / JCM 9974 / NBRC 100139 / OT-3).